Reading from the N-terminus, the 1997-residue chain is Chromatin-remodeling ATPase INO80 (1997 aa).

Disordered stretches follow at residues 1 to 378 (MDHF…AAPS), 397 to 579 (IAAP…AENE), and 674 to 858 (ERKK…EKVV). Residues 12 to 25 (PHFDEDGTEGRGDR) are compositionally biased toward basic and acidic residues. Positions 32–41 (GPAPPPPPPR) are enriched in pro residues. A compositionally biased stretch (low complexity) spans 49–64 (NPVSSNSAVQSQAAAA). Residues 89 to 107 (STNSMRATPHSSSSFNLRS) are compositionally biased toward polar residues. Basic and acidic residues predominate over residues 108-117 (PTREPSEYRH). 3 stretches are compositionally biased toward low complexity: residues 118–156 (PLSS…SLSS), 203–230 (SLQA…PLSA), and 240–251 (SSSSQPPARASQ). Residues 264–276 (SFRDRDSSVREKS) are compositionally biased toward basic and acidic residues. Over residues 288–297 (EASNGISGSS) the composition is skewed to polar residues. The span at 298–317 (PRKDRDRDRDHRGTTRESQR) shows a compositional bias: basic and acidic residues. 2 stretches are compositionally biased toward polar residues: residues 318 to 340 (RSVS…SASN) and 366 to 378 (VDNT…AAPS). Over residues 411–420 (SPRLSLRPPS) the composition is skewed to low complexity. Polar residues-rich tracts occupy residues 433–442 (NPTNGTTSTA), 451–465 (SPPS…TNPS), and 472–481 (SFSNILSSSE). 2 stretches are compositionally biased toward basic and acidic residues: residues 500–519 (VPMK…EKKE) and 529–540 (RISDIRHSESTP). Positions 666 to 735 (ERELFAEKER…VQQTRLILQK (70 aa)) form a coiled coil. Over residues 689–707 (MATTMEAKAAALARASAAQ) the composition is skewed to low complexity. Residues 709-723 (EAERQKYMREAERAN) are compositionally biased toward basic and acidic residues. Residues 769–781 (TKGKGRAGARPKK) are compositionally biased toward basic residues. Basic and acidic residues predominate over residues 782 to 793 (SKEQKQAEKDAA). Over residues 794–806 (EAAQAALDAGLEL) the composition is skewed to low complexity. Positions 824 to 858 (APKEADVDKDKENKEPQEPKEPKEPKEKVIKEKVV) are enriched in basic and acidic residues. The region spanning 881–1006 (IWRDLARKDV…SHFIGKKIKT (126 aa)) is the DBINO domain. The 173-residue stretch at 1130–1302 (VNLYEQGING…WALLHFIMPS (173 aa)) folds into the Helicase ATP-binding domain. 1143–1150 (DEMGLGKT) serves as a coordination point for ATP. Positions 1253–1256 (DEAQ) match the DEAQ box motif. One can recognise a Helicase C-terminal domain in the interval 1702-1858 (KLDELLRELK…GSSAAGGGVD (157 aa)). Residues 1891–1902 (ELLESGELDKMQ) are compositionally biased toward basic and acidic residues. The tract at residues 1891–1986 (ELLESGELDK…GSKKAKTTKQ (96 aa)) is disordered. Residues 1903 to 1914 (KKSRGGNKRKRG) show a composition bias toward basic residues. Residues 1919–1933 (EGKEVSLDEMYHEGE) are compositionally biased toward basic and acidic residues. Over residues 1954–1967 (AAGGEGGDGKGAVG) the composition is skewed to gly residues. The segment covering 1970–1985 (AKKRKTGGSKKAKTTK) has biased composition (basic residues).

This sequence belongs to the SNF2/RAD54 helicase family. Component of the INO80 chromatin-remodeling complex.

The protein resides in the nucleus. It carries out the reaction ATP + H2O = ADP + phosphate + H(+). In terms of biological role, ATPase component of the INO80 complex which remodels chromatin by shifting nucleosomes and is involved in DNA repair. The sequence is that of Chromatin-remodeling ATPase INO80 (crf2-1) from Neurospora crassa (strain ATCC 24698 / 74-OR23-1A / CBS 708.71 / DSM 1257 / FGSC 987).